Here is a 489-residue protein sequence, read N- to C-terminus: UDP-N-acetylmuramate--L-alanine ligase (489 aa).

128–134 is an ATP binding site; that stretch reads GTHGKTT.

It belongs to the MurCDEF family.

It is found in the cytoplasm. It carries out the reaction UDP-N-acetyl-alpha-D-muramate + L-alanine + ATP = UDP-N-acetyl-alpha-D-muramoyl-L-alanine + ADP + phosphate + H(+). The protein operates within cell wall biogenesis; peptidoglycan biosynthesis. In terms of biological role, cell wall formation. The protein is UDP-N-acetylmuramate--L-alanine ligase of Shewanella sediminis (strain HAW-EB3).